We begin with the raw amino-acid sequence, 266 residues long: Zinc transport system ATP-binding protein TroB (266 aa).

The 233-residue stretch at 11–243 (VQVDDLTLAY…YVQRAYGGRI (233 aa)) folds into the ABC transporter domain. 43-50 (GPNGAGKS) serves as a coordination point for ATP.

This sequence belongs to the ABC transporter superfamily.

Functionally, part of an ATP-driven transport system TroABCD for zinc. In Treponema pallidum (strain Nichols), this protein is Zinc transport system ATP-binding protein TroB (troB).